Here is a 195-residue protein sequence, read N- to C-terminus: Thymidine kinase (195 aa).

ATP is bound by residues 15–22 (GSMFSGKS) and 88–91 (DEVQ). Glu89 functions as the Proton acceptor in the catalytic mechanism. Positions 145, 148, 183, and 186 each coordinate Zn(2+).

This sequence belongs to the thymidine kinase family. As to quaternary structure, homotetramer.

It localises to the cytoplasm. It carries out the reaction thymidine + ATP = dTMP + ADP + H(+). This is Thymidine kinase from Bacillus cereus (strain ATCC 10987 / NRS 248).